Consider the following 222-residue polypeptide: Putative metal transport protein MJ1569 (222 aa).

Transmembrane regions (helical) follow at residues 3-23 (IPDGYLGPITCAFFYLIMIPI), 39-59 (LPLLGVLTAFSFLVMMFNLPV), 81-101 (WVATIAISIVLIIQAIFFGDG), 102-122 (GITCIGANCFNMGVVLPFVGY), 135-155 (VIASGIGAYVGIVAAAIVAGF), and 180-200 (AFAHLITAGPAAAVVTAIVVW).

It belongs to the CbiM family.

The protein resides in the cell membrane. Functionally, may be involved in metal transport. The protein is Putative metal transport protein MJ1569 of Methanocaldococcus jannaschii (strain ATCC 43067 / DSM 2661 / JAL-1 / JCM 10045 / NBRC 100440) (Methanococcus jannaschii).